A 542-amino-acid polypeptide reads, in one-letter code: Chaperonin GroEL (542 aa).

Residues 29–32 (TLGP), 86–90 (DGTTT), Gly-413, 478–480 (DAL), and Asp-494 contribute to the ATP site.

This sequence belongs to the chaperonin (HSP60) family. As to quaternary structure, forms a cylinder of 14 subunits composed of two heptameric rings stacked back-to-back. Interacts with the co-chaperonin GroES.

It is found in the cytoplasm. It catalyses the reaction ATP + H2O + a folded polypeptide = ADP + phosphate + an unfolded polypeptide.. Together with its co-chaperonin GroES, plays an essential role in assisting protein folding. The GroEL-GroES system forms a nano-cage that allows encapsulation of the non-native substrate proteins and provides a physical environment optimized to promote and accelerate protein folding. The sequence is that of Chaperonin GroEL from Clostridioides difficile (strain 630) (Peptoclostridium difficile).